The following is a 376-amino-acid chain: Chaperone protein DnaJ (376 aa).

The 66-residue stretch at 5–70 folds into the J domain; it reads DFYEVLGVGR…DKKAAYDQFG (66 aa). A CR-type zinc finger spans residues 132 to 210; it reads GLTKELRIPT…CHGEGRVEKS (79 aa). Cysteine 145, cysteine 148, cysteine 162, cysteine 165, cysteine 184, cysteine 187, cysteine 198, and cysteine 201 together coordinate Zn(2+). CXXCXGXG motif repeat units follow at residues 145 to 152, 162 to 169, 184 to 191, and 198 to 205; these read CDACDGSG, CGTCHGQG, CPTCHGRG, and CNKCHGEG.

The protein belongs to the DnaJ family. Homodimer. Requires Zn(2+) as cofactor.

Its subcellular location is the cytoplasm. Participates actively in the response to hyperosmotic and heat shock by preventing the aggregation of stress-denatured proteins and by disaggregating proteins, also in an autonomous, DnaK-independent fashion. Unfolded proteins bind initially to DnaJ; upon interaction with the DnaJ-bound protein, DnaK hydrolyzes its bound ATP, resulting in the formation of a stable complex. GrpE releases ADP from DnaK; ATP binding to DnaK triggers the release of the substrate protein, thus completing the reaction cycle. Several rounds of ATP-dependent interactions between DnaJ, DnaK and GrpE are required for fully efficient folding. Also involved, together with DnaK and GrpE, in the DNA replication of plasmids through activation of initiation proteins. The sequence is that of Chaperone protein DnaJ from Shewanella halifaxensis (strain HAW-EB4).